A 54-amino-acid chain; its full sequence is Protein YmjE (54 aa).

The chain is Protein YmjE from Escherichia coli (strain K12).